The primary structure comprises 145 residues: UPF0179 protein MmarC7_0952 (145 aa).

This sequence belongs to the UPF0179 family.

The polypeptide is UPF0179 protein MmarC7_0952 (Methanococcus maripaludis (strain C7 / ATCC BAA-1331)).